The primary structure comprises 1529 residues: Slit homolog 2 protein (1529 aa).

Residues 1-30 (MRGVGWQMLSLSLGLVLAILNKVAPQACPA) form the signal peptide. An LRRNT domain is found at 31–55 (QCSCSGSTVDCHGLALRSVPRNIPR). LRR repeat units follow at residues 56–77 (NTER…DFAG), 80–101 (HLRV…AFQD), 104–125 (ELER…LFLG), 128–149 (KLYR…AFRG), 152–173 (DIKN…AFRA), and 176–197 (DLEV…SFNH). N66 carries N-linked (GlcNAc...) asparagine glycosylation. A glycan (N-linked (GlcNAc...) asparagine) is linked at N186. Positions 209–259 (NNLYCDCHLAWLSDWLRQRPRVGLYTQCMGPSHLRGHNVAEVQKREFVCSG) constitute an LRRCT 1 domain. The LRRNT 2 domain occupies 264–300 (MAPSCSVLHCPAACTCSNNIVDCRGKGLTEIPTNLPE). C277 and C286 form a disulfide bridge. LRR repeat units follow at residues 301–322 (TITE…AFSP), 325–346 (KLRR…AFQG), 349–370 (SLNS…LFEG), 373–394 (SLQL…AFQD), and 397–418 (NLNL…TFSP). Residues 430–480 (NPFICDCHLKWLADYLHTNPIETSGARCTSPRRLANKRIGQIKSKKFRCSA) enclose the LRRCT 2 domain. 4 disulfide bridges follow: C434/C457, C436/C478, C506/C512, and C510/C519. The LRRNT 3 domain maps to 497 to 533 (SGDCFADLACPEKCRCEGTTVDCSNQKLNKIPEHIPQ). LRR repeat units follow at residues 534-555 (YTAE…GIFK), 559-580 (QLRK…AFEG), 583-604 (GVNE…MFKG), 607-628 (SLKT…SFIG), and 631-652 (SVRL…AFDT). A glycan (N-linked (GlcNAc...) asparagine) is linked at N564. A glycan (N-linked (GlcNAc...) asparagine) is linked at N623. An LRRCT 3 domain is found at 664–714 (NPFNCNCYLAWLGEWLRKKRIVTGNPRCQKPYFLKEIPIQDVAIQDFTCDD). Cystine bridges form between C668–C691, C670–C712, C727–C733, and C731–C740. One can recognise an LRRNT 4 domain in the interval 718-754 (DNSCSPLSRCPTECTCLDTVVRCSNKGLKVLPKGIPR). LRR repeat units lie at residues 755–777 (DVTE…SNYK), 778–799 (HLTL…SFSN), 802–823 (QLLT…TFDG), and 826–847 (SLRL…AFND). N794 and N799 each carry an N-linked (GlcNAc...) asparagine glycan. Positions 859–909 (NPLYCDCNMQWLSDWVKSEYKEPGIARCAGPGEMADKLLLTTPSKKFTCQG) constitute an LRRCT 4 domain. 20 disulfides stabilise this stretch: C863/C886, C865/C907, C922/C933, C927/C943, C945/C954, C961/C972, C966/C984, C986/C995, C1002/C1013, C1007/C1022, C1024/C1033, C1040/C1053, C1047/C1062, C1064/C1073, C1080/C1091, C1085/C1100, C1102/C1111, C1125/C1136, C1130/C1145, and C1147/C1156. EGF-like domains follow at residues 918-955 (KCNP…QDCD) and 957-996 (PIHA…ENCE). The 37-residue stretch at 998–1034 (NVDDCEDNDCENNSTCVDGINNYTCLCPPEYTGELCE) folds into the EGF-like 3; calcium-binding domain. N-linked (GlcNAc...) asparagine glycans are attached at residues N1009, N1010, and N1019. Positions 1036–1074 (KLDFCAQDLNPCQHDSKCILTPKGFKCDCTPGYVGEHCD) constitute an EGF-like 4 domain. An EGF-like 5; calcium-binding domain is found at 1076-1112 (DFDDCQDNKCKNGAHCTDAVNGYTCICPEGYSGLFCE). The EGF-like 6 domain occupies 1121–1157 (RTSPCDNFDCQNGAQCIVRINEPICQCLPGYQGEKCE). The region spanning 1160–1333 (VSVNFINKES…PMQTGILPGC (174 aa)) is the Laminin G-like domain. N-linked (GlcNAc...) asparagine glycosylation is found at N1183, N1266, and N1300. Intrachain disulfides connect C1307–C1333, C1336–C1346, C1341–C1356, C1358–C1367, C1375–C1385, C1380–C1395, C1397–C1406, C1416–C1426, C1421–C1436, C1438–C1447, C1453–C1492, C1471–C1506, C1482–C1522, and C1486–C1524. Positions 1332–1368 (GCEPCHKKVCAHGTCQPSSQAGFTCECQEGWMGPLCD) constitute an EGF-like 7 domain. The 76-residue stretch at 1453–1528 (CRGERIRDYY…VVKCGCTRCV (76 aa)) folds into the CTCK domain.

In terms of assembly, interacts with GREM1. Homodimer. Binds ROBO1 and ROBO2 with high affinity. Fetal lung and kidney, and adult spinal cord. Weak expression in adult adrenal gland, thyroid, trachea and other tissues examined.

The protein resides in the secreted. Functionally, thought to act as molecular guidance cue in cellular migration, and function appears to be mediated by interaction with roundabout homolog receptors. During neural development involved in axonal navigation at the ventral midline of the neural tube and projection of axons to different regions. SLIT1 and SLIT2 seem to be essential for midline guidance in the forebrain by acting as repulsive signal preventing inappropriate midline crossing by axons projecting from the olfactory bulb. In spinal cord development may play a role in guiding commissural axons once they reached the floor plate by modulating the response to netrin. In vitro, silences the attractive effect of NTN1 but not its growth-stimulatory effect and silencing requires the formation of a ROBO1-DCC complex. May be implicated in spinal cord midline post-crossing axon repulsion. In vitro, only commissural axons that crossed the midline responded to SLIT2. In the developing visual system appears to function as repellent for retinal ganglion axons by providing a repulsion that directs these axons along their appropriate paths prior to, and after passage through, the optic chiasm. In vitro, collapses and repels retinal ganglion cell growth cones. Seems to play a role in branching and arborization of CNS sensory axons, and in neuronal cell migration. In vitro, Slit homolog 2 protein N-product, but not Slit homolog 2 protein C-product, repels olfactory bulb (OB) but not dorsal root ganglia (DRG) axons, induces OB growth cones collapse and induces branching of DRG axons. Seems to be involved in regulating leukocyte migration. This chain is Slit homolog 2 protein (SLIT2), found in Homo sapiens (Human).